The following is a 201-amino-acid chain: Small ribosomal subunit protein uS4 (201 aa).

The region spanning 91-151 (SRLDNVVYRA…EKSQKMNWFE (61 aa)) is the S4 RNA-binding domain.

This sequence belongs to the universal ribosomal protein uS4 family. As to quaternary structure, part of the 30S ribosomal subunit. Contacts protein S5. The interaction surface between S4 and S5 is involved in control of translational fidelity.

Its function is as follows. One of the primary rRNA binding proteins, it binds directly to 16S rRNA where it nucleates assembly of the body of the 30S subunit. Functionally, with S5 and S12 plays an important role in translational accuracy. This chain is Small ribosomal subunit protein uS4, found in Corynebacterium efficiens (strain DSM 44549 / YS-314 / AJ 12310 / JCM 11189 / NBRC 100395).